Reading from the N-terminus, the 236-residue chain is Ribose-5-phosphate isomerase A (236 aa).

Substrate is bound by residues 28 to 31 (TGST), 83 to 86 (DGAD), and 96 to 99 (KGGG). E105 functions as the Proton acceptor in the catalytic mechanism. Substrate is bound at residue K123.

It belongs to the ribose 5-phosphate isomerase family. In terms of assembly, homodimer.

It carries out the reaction aldehydo-D-ribose 5-phosphate = D-ribulose 5-phosphate. It participates in carbohydrate degradation; pentose phosphate pathway; D-ribose 5-phosphate from D-ribulose 5-phosphate (non-oxidative stage): step 1/1. Catalyzes the reversible conversion of ribose-5-phosphate to ribulose 5-phosphate. The chain is Ribose-5-phosphate isomerase A from Methylorubrum populi (strain ATCC BAA-705 / NCIMB 13946 / BJ001) (Methylobacterium populi).